The chain runs to 300 residues: Formylmethanofuran--tetrahydromethanopterin formyltransferase-like protein (300 aa).

It belongs to the FTR family.

This chain is Formylmethanofuran--tetrahydromethanopterin formyltransferase-like protein, found in Methanopyrus kandleri (strain AV19 / DSM 6324 / JCM 9639 / NBRC 100938).